Here is a 345-residue protein sequence, read N- to C-terminus: Anthranilate phosphoribosyltransferase (345 aa).

5-phospho-alpha-D-ribose 1-diphosphate is bound by residues G83, 86–87, T91, 93–96, 111–119, and S123; these read GD, NIST, and KHGNRNLSS. G83 serves as a coordination point for anthranilate. S95 provides a ligand contact to Mg(2+). N114 serves as a coordination point for anthranilate. Residue R169 participates in anthranilate binding. The Mg(2+) site is built by D228 and E229.

The protein belongs to the anthranilate phosphoribosyltransferase family. As to quaternary structure, homodimer. It depends on Mg(2+) as a cofactor.

The enzyme catalyses N-(5-phospho-beta-D-ribosyl)anthranilate + diphosphate = 5-phospho-alpha-D-ribose 1-diphosphate + anthranilate. Its pathway is amino-acid biosynthesis; L-tryptophan biosynthesis; L-tryptophan from chorismate: step 2/5. In terms of biological role, catalyzes the transfer of the phosphoribosyl group of 5-phosphorylribose-1-pyrophosphate (PRPP) to anthranilate to yield N-(5'-phosphoribosyl)-anthranilate (PRA). This Paracoccus denitrificans (strain Pd 1222) protein is Anthranilate phosphoribosyltransferase.